The chain runs to 118 residues: Large ribosomal subunit protein bL20 (118 aa).

The protein belongs to the bacterial ribosomal protein bL20 family.

In terms of biological role, binds directly to 23S ribosomal RNA and is necessary for the in vitro assembly process of the 50S ribosomal subunit. It is not involved in the protein synthesizing functions of that subunit. This Thermotoga neapolitana (strain ATCC 49049 / DSM 4359 / NBRC 107923 / NS-E) protein is Large ribosomal subunit protein bL20.